A 190-amino-acid polypeptide reads, in one-letter code: Putative manganese efflux pump MntP (190 aa).

Helical transmembrane passes span 3–23 (MSAT…ASIG), 41–61 (LIFG…GFFA), 62–82 (SQYI…ILGG), 105–127 (LALL…VGLA), 143–163 (ATMI…PILG), and 168–188 (VMGG…HLGY).

This sequence belongs to the MntP (TC 9.B.29) family.

The protein resides in the cell inner membrane. Its function is as follows. Probably functions as a manganese efflux pump. The protein is Putative manganese efflux pump MntP of Pectobacterium carotovorum subsp. carotovorum (strain PC1).